Reading from the N-terminus, the 482-residue chain is Putative L-cysteine desulfhydrase 1 (482 aa).

Positions 1-10 (MASIPPDDDA) are enriched in acidic residues. A disordered region spans residues 1–45 (MASIPPDDDAAAAAAAGAAENGYGNGKGNGNGPAPRPPPAKRPRS). Positions 11 to 22 (AAAAAAGAAENG) are enriched in low complexity. K276 is modified (N6-(pyridoxal phosphate)lysine).

This sequence belongs to the class-V pyridoxal-phosphate-dependent aminotransferase family. Requires pyridoxal 5'-phosphate as cofactor.

The enzyme catalyses L-cysteine + H2O = hydrogen sulfide + pyruvate + NH4(+) + H(+). Functionally, catalyzes the production of hydrogen sulfide (H2S) from cysteine. The protein is Putative L-cysteine desulfhydrase 1 of Oryza sativa subsp. japonica (Rice).